The chain runs to 177 residues: Transcription antitermination protein NusB (177 aa).

Positions 1 to 35 (MTDSTHPTPSARPPRQPRTGTTGTGARKAGSKSGR) are disordered. Low complexity predominate over residues 17 to 28 (PRTGTTGTGARK).

Belongs to the NusB family.

Functionally, involved in transcription antitermination. Required for transcription of ribosomal RNA (rRNA) genes. Binds specifically to the boxA antiterminator sequence of the ribosomal RNA (rrn) operons. The sequence is that of Transcription antitermination protein NusB from Acidovorax sp. (strain JS42).